We begin with the raw amino-acid sequence, 147 residues long: Hemoglobin subunit beta-2 (147 aa).

Residues glutamate 3–histidine 147 form the Globin domain. Histidine 64 and histidine 93 together coordinate heme b.

It belongs to the globin family. As to quaternary structure, hb 3 is a heterotetramer of two alpha-2 and two beta-2 chains. Red blood cells.

In terms of biological role, involved in oxygen transport from gills to the various peripheral tissues. This Arctogadus glacialis (Arctic cod) protein is Hemoglobin subunit beta-2 (hbb2).